A 513-amino-acid chain; its full sequence is Serine/threonine-protein phosphatase T (513 aa).

TPR repeat units follow at residues 12–45, 46–79, and 80–113; these read ALERKNEGNVFVKEKHFLKAIEKYTEAIDLDSTQ, SIYFSNRAFAHFKVDNFQSALNDCDEAIKLDPKN, and IKAYHRRALSCMALLEFKKARKDLNVLLKAKPND. Positions 188-513 are catalytic; the sequence is KNMSQEFISK…MAYSNGGFGL (326 aa). Asp249, His251, Asp278, and Asn310 together coordinate Mn(2+). His311 acts as the Proton donor/acceptor in catalysis. Mn(2+) contacts are provided by His359 and His434.

Belongs to the PPP phosphatase family. PP-5 (PP-T) subfamily. Interacts (via TPR repeats) with HSP82 (via C-terminal MEEVD pentapeptide). Requires Mg(2+) as cofactor. Mn(2+) is required as a cofactor.

It localises to the nucleus. The enzyme catalyses O-phospho-L-seryl-[protein] + H2O = L-seryl-[protein] + phosphate. It carries out the reaction O-phospho-L-threonyl-[protein] + H2O = L-threonyl-[protein] + phosphate. Stimulated by arachidonic acid and other unsaturated fatty acids, and by arachidoyl coenzyme A. Functionally, protein phosphatase that specifically binds to and dephosphorylates the molecular chaperone Hsp90 (HSC82 and HSP82). Dephosphorylation positively regulates the Hsp90 chaperone machinery. This is Serine/threonine-protein phosphatase T (PPT1) from Saccharomyces cerevisiae (strain ATCC 204508 / S288c) (Baker's yeast).